Consider the following 216-residue polypeptide: Ras-related protein Rab11A (216 aa).

GTP-binding positions include G19–N27, C38–T44, D67–Q71, N125–D128, and S155–L157. Residues S41 to F49 carry the Effector region motif. Residues C213 and C214 are each lipidated (S-geranylgeranyl cysteine).

Belongs to the small GTPase superfamily. Rab family.

The protein resides in the cell membrane. The protein is Ras-related protein Rab11A (RAB11A) of Nicotiana tabacum (Common tobacco).